A 218-amino-acid chain; its full sequence is Thiopurine S-methyltransferase (218 aa).

S-adenosyl-L-methionine is bound by residues Trp-10, Leu-45, Glu-66, and Arg-123.

Belongs to the class I-like SAM-binding methyltransferase superfamily. TPMT family.

Its subcellular location is the cytoplasm. The catalysed reaction is S-adenosyl-L-methionine + a thiopurine = S-adenosyl-L-homocysteine + a thiopurine S-methylether.. The sequence is that of Thiopurine S-methyltransferase from Shewanella oneidensis (strain ATCC 700550 / JCM 31522 / CIP 106686 / LMG 19005 / NCIMB 14063 / MR-1).